Here is a 633-residue protein sequence, read N- to C-terminus: Biosynthetic arginine decarboxylase (633 aa).

N6-(pyridoxal phosphate)lysine is present on Lys101. 284–294 is a binding site for substrate; that stretch reads VDVGGGLGVDY.

It belongs to the Orn/Lys/Arg decarboxylase class-II family. SpeA subfamily. Mg(2+) is required as a cofactor. The cofactor is pyridoxal 5'-phosphate.

It catalyses the reaction L-arginine + H(+) = agmatine + CO2. It functions in the pathway amine and polyamine biosynthesis; agmatine biosynthesis; agmatine from L-arginine: step 1/1. Catalyzes the biosynthesis of agmatine from arginine. The sequence is that of Biosynthetic arginine decarboxylase from Aeromonas hydrophila subsp. hydrophila (strain ATCC 7966 / DSM 30187 / BCRC 13018 / CCUG 14551 / JCM 1027 / KCTC 2358 / NCIMB 9240 / NCTC 8049).